The following is a 542-amino-acid chain: Pre-mRNA-splicing factor 38B (542 aa).

A compositionally biased stretch (polar residues) spans 1–12; sequence MANNSPALTGNS. The segment at 1-41 is disordered; sequence MANNSPALTGNSQPQHQAAAAVTQQQQQCGGGGGATKPAVS. N-acetylalanine is present on Ala2. Position 5 is a phosphoserine (Ser5). Positions 13–28 are enriched in low complexity; it reads QPQHQAAAAVTQQQQQ. Position 228 is an N6-acetyllysine (Lys228). The interval 233–542 is disordered; that stretch reads QIKTRPRKIK…KEHKSKDETV (310 aa). Positions 244–256 are enriched in basic and acidic residues; sequence DGKEGIEEIDRHV. Positions 257–285 are enriched in basic residues; sequence ERRRSRSPRRSLSPRRSPRRSRSRSHHRE. Residues Ser289, Ser291, Ser319, and Ser321 each carry the phosphoserine modification. The span at 292–328 shows a compositional bias: basic and acidic residues; that stretch reads FDRELEREKERQRLEREAKEREKERRRSRSIDRGLDR. Residues 293–322 are a coiled coil; it reads DRELEREKERQRLEREAKEREKERRRSRSI. The segment covering 329–345 has biased composition (basic residues); sequence RRSRSRERHRSRSRSRD. The span at 346–419 shows a compositional bias: basic and acidic residues; that stretch reads RKGDRRDRDR…DRRHRDDKKE (74 aa). Basic residues predominate over residues 420–447; sequence SKKKHSRSRSRERKHRSRSRNAGKRSRS. At Ser445 the chain carries Phosphoserine. Over residues 448–465 the composition is skewed to basic and acidic residues; that stretch reads RSKDKSSRHKNESKEKAN. Ser470, Ser472, and Ser478 each carry phosphoserine. 2 stretches are compositionally biased toward basic and acidic residues: residues 478–491 and 498–520; these read SVEK…PSRE and RSQD…RQDH. Residues Ser523, Ser525, and Ser530 each carry the phosphoserine modification. The span at 530 to 542 shows a compositional bias: basic and acidic residues; the sequence is SQEKEHKSKDETV.

The protein belongs to the PRP38 family.

Its subcellular location is the nucleus. In terms of biological role, may be required for pre-mRNA splicing. The chain is Pre-mRNA-splicing factor 38B (Prpf38b) from Mus musculus (Mouse).